A 582-amino-acid chain; its full sequence is Cryptochrome-2 (582 aa).

A Photolyase/cryptochrome alpha/beta domain is found at 12–141 (CRSVHWFRRG…EVVIENSHTL (130 aa)). Residues serine 261, glutamine 298, histidine 364, and 396 to 398 (DAD) each bind FAD. Residues 521-559 (GPVTDSAPGQGSSTSTAVRLPQSDQASPKRKHEGAEELC) form a disordered region. The segment covering 527 to 546 (APGQGSSTSTAVRLPQSDQA) has biased composition (polar residues).

It belongs to the DNA photolyase class-1 family. In terms of assembly, component of the circadian core oscillator, which includes the CRY proteins, CLOCK or NPAS2, BMAL1 or BMAL2, CSNK1E, and the PER proteins. It depends on FAD as a cofactor. The cofactor is (6R)-5,10-methylene-5,6,7,8-tetrahydrofolate. As to expression, expressed in the pineal gland.

It localises to the cytoplasm. The protein localises to the nucleus. Transcriptional repressor which forms a core component of the circadian clock. The circadian clock, an internal time-keeping system, regulates various physiological processes through the generation of approximately 24 hour circadian rhythms in gene expression, which are translated into rhythms in metabolism and behavior. It is derived from the Latin roots 'circa' (about) and 'diem' (day) and acts as an important regulator of a wide array of physiological functions including metabolism, sleep, body temperature, blood pressure, endocrine, immune, cardiovascular, and renal function. Consists of two major components: the central clock, residing in the suprachiasmatic nucleus (SCN) of the brain, and the peripheral clocks that are present in nearly every tissue and organ system. Both the central and peripheral clocks can be reset by environmental cues, also known as Zeitgebers (German for 'timegivers'). The predominant Zeitgeber for the central clock is light, which is sensed by retina and signals directly to the SCN. The central clock entrains the peripheral clocks through neuronal and hormonal signals, body temperature and feeding-related cues, aligning all clocks with the external light/dark cycle. Circadian rhythms allow an organism to achieve temporal homeostasis with its environment at the molecular level by regulating gene expression to create a peak of protein expression once every 24 hours to control when a particular physiological process is most active with respect to the solar day. Transcription and translation of core clock components (CLOCK, NPAS2, BMAL1, BMAL2, PER1, PER2, PER3, CRY1 and CRY2) plays a critical role in rhythm generation, whereas delays imposed by post-translational modifications (PTMs) are important for determining the period (tau) of the rhythms (tau refers to the period of a rhythm and is the length, in time, of one complete cycle). A diurnal rhythm is synchronized with the day/night cycle, while the ultradian and infradian rhythms have a period shorter and longer than 24 hours, respectively. Disruptions in the circadian rhythms contribute to the pathology of cardiovascular diseases, cancer, metabolic syndromes and aging. A transcription/translation feedback loop (TTFL) forms the core of the molecular circadian clock mechanism. Transcription factors, CLOCK or NPAS2 and BMAL1 or BMAL2, form the positive limb of the feedback loop, act in the form of a heterodimer and activate the transcription of core clock genes and clock-controlled genes (involved in key metabolic processes), harboring E-box elements (5'-CACGTG-3') within their promoters. The core clock genes: PER1/2/3 and CRY1/2 which are transcriptional repressors form the negative limb of the feedback loop and interact with the CLOCK|NPAS2-BMAL1|BMAL2 heterodimer inhibiting its activity and thereby negatively regulating their own expression. This heterodimer also activates nuclear receptors NR1D1/2, RORA/B/G, which form a second feedback loop and which activate and repress BMAL1 transcription, respectively. CRY1 and CRY2 have redundant functions but also differential and selective contributions at least in defining the pace of the SCN circadian clock and its circadian transcriptional outputs. Less potent transcriptional repressor in cerebellum and liver than CRY1, though less effective in lengthening the period of the SCN oscillator. Seems to play a critical role in tuning SCN circadian period by opposing the action of CRY1. With CRY1, dispensable for circadian rhythm generation but necessary for the development of intercellular networks for rhythm synchrony. Represses CLOCK-BMAL1-mediated transcriptional activation. The polypeptide is Cryptochrome-2 (CRY2) (Gallus gallus (Chicken)).